We begin with the raw amino-acid sequence, 115 residues long: U3-lycotoxin-Ls1f (115 aa).

An N-terminal signal peptide occupies residues 1–20 (MKFVLLFGVLLVTLFSYSSA). The propeptide occupies 21-44 (EMLDDFDQADEDELLSLIEKEEAR). Cystine bridges form between C48–C63, C55–C72, C62–C87, and C74–C85.

It belongs to the neurotoxin 19 (CSTX) family. 01 subfamily. As to expression, expressed by the venom gland.

Its subcellular location is the secreted. This is U3-lycotoxin-Ls1f from Lycosa singoriensis (Wolf spider).